We begin with the raw amino-acid sequence, 108 residues long: Ribonuclease P protein component 4 (108 aa).

Cys-67, Cys-70, Cys-93, and Cys-96 together coordinate Zn(2+).

Belongs to the eukaryotic/archaeal RNase P protein component 4 family. As to quaternary structure, consists of a catalytic RNA component and at least 4-5 protein subunits. It depends on Zn(2+) as a cofactor.

It is found in the cytoplasm. The catalysed reaction is Endonucleolytic cleavage of RNA, removing 5'-extranucleotides from tRNA precursor.. In terms of biological role, part of ribonuclease P, a protein complex that generates mature tRNA molecules by cleaving their 5'-ends. This Methanococcoides burtonii (strain DSM 6242 / NBRC 107633 / OCM 468 / ACE-M) protein is Ribonuclease P protein component 4.